A 310-amino-acid polypeptide reads, in one-letter code: Ribosomal protein L11 methyltransferase (310 aa).

S-adenosyl-L-methionine contacts are provided by threonine 156, glycine 179, aspartate 201, and asparagine 246.

It belongs to the methyltransferase superfamily. PrmA family.

The protein resides in the cytoplasm. It carries out the reaction L-lysyl-[protein] + 3 S-adenosyl-L-methionine = N(6),N(6),N(6)-trimethyl-L-lysyl-[protein] + 3 S-adenosyl-L-homocysteine + 3 H(+). Methylates ribosomal protein L11. This is Ribosomal protein L11 methyltransferase from Desulfatibacillum aliphaticivorans.